The sequence spans 299 residues: Glutamyl-Q tRNA(Asp) synthetase (299 aa).

Residues 9–13 and Glu45 each bind L-glutamate; that span reads RFAPS. Positions 12 to 22 match the 'HIGH' region motif; sequence PSPTGPLHFGS. Residues Cys101, Cys103, and Cys118 each contribute to the Zn(2+) site. 2 residues coordinate L-glutamate: Tyr170 and Arg188. The 'KMSKS' region signature appears at 226-230; that stretch reads KLSKS. Residue Lys229 participates in ATP binding.

It belongs to the class-I aminoacyl-tRNA synthetase family. GluQ subfamily. Zn(2+) is required as a cofactor.

Catalyzes the tRNA-independent activation of glutamate in presence of ATP and the subsequent transfer of glutamate onto a tRNA(Asp). Glutamate is transferred on the 2-amino-5-(4,5-dihydroxy-2-cyclopenten-1-yl) moiety of the queuosine in the wobble position of the QUC anticodon. The chain is Glutamyl-Q tRNA(Asp) synthetase from Xanthomonas axonopodis pv. citri (strain 306).